The primary structure comprises 501 residues: NAD(P)H-quinone oxidoreductase chain 4, chloroplastic (501 aa).

14 helical membrane-spanning segments follow: residues 4–24 (FPWLTTIVLLPVFAGCVIPFF), 35–55 (YTLGVCLLEFLLITYVFCYYF), 87–107 (IGLILLTGFITTLATLAAWPV), 113–133 (LFYFLMLAMYSGQVGLFASQD), 134–154 (ILLFFFMWELELIPVYLLLCI), 167–187 (FILYTAGGSIFILMGALTMGF), 211–231 (IILYLGFFIAYAVKLPIFPLH), 242–262 (HYSTCMLLAGILLKMGGYGLI), 274–294 (SIFAPWIVAVGAIQIVYAALI), 310–330 (ISHMGFVLIGIGSMTDVGLNG), 331–351 (AILQMVSHGLIGAALFFLAGI), 386–406 (LALPGMSGFVAEFLVFLGIVV), 416–436 (ILVTIIEAIGIILTPIYLLSM), and 464–484 (IFILVCLIFPIVGIGLYPNSV).

The protein belongs to the complex I subunit 4 family.

The protein localises to the plastid. The protein resides in the chloroplast thylakoid membrane. It carries out the reaction a plastoquinone + NADH + (n+1) H(+)(in) = a plastoquinol + NAD(+) + n H(+)(out). The enzyme catalyses a plastoquinone + NADPH + (n+1) H(+)(in) = a plastoquinol + NADP(+) + n H(+)(out). This chain is NAD(P)H-quinone oxidoreductase chain 4, chloroplastic, found in Physcomitrium patens (Spreading-leaved earth moss).